Reading from the N-terminus, the 339-residue chain is Serine/threonine-protein kinase pdik1l-A (339 aa).

The 325-residue stretch at 8–332 (YDLIREVGRG…LELKLIQIAF (325 aa)) folds into the Protein kinase domain. Residues 14 to 22 (VGRGSYGVV) and K37 contribute to the ATP site. The Proton acceptor role is filled by D164.

This sequence belongs to the protein kinase superfamily. Ser/Thr protein kinase family.

The protein resides in the nucleus. The enzyme catalyses L-seryl-[protein] + ATP = O-phospho-L-seryl-[protein] + ADP + H(+). The catalysed reaction is L-threonyl-[protein] + ATP = O-phospho-L-threonyl-[protein] + ADP + H(+). This chain is Serine/threonine-protein kinase pdik1l-A (pdik1-a), found in Xenopus laevis (African clawed frog).